The following is a 313-amino-acid chain: NADH-ubiquinone oxidoreductase chain 1 (313 aa).

8 helical membrane passes run Leu-7–Leu-27, Ile-73–Met-93, Leu-104–Gly-124, Leu-150–Phe-170, Tyr-175–Ala-195, Leu-226–Phe-246, Asp-250–Val-270, and Met-293–Phe-313.

Belongs to the complex I subunit 1 family.

It is found in the mitochondrion inner membrane. It catalyses the reaction a ubiquinone + NADH + 5 H(+)(in) = a ubiquinol + NAD(+) + 4 H(+)(out). Functionally, core subunit of the mitochondrial membrane respiratory chain NADH dehydrogenase (Complex I) that is believed to belong to the minimal assembly required for catalysis. Complex I functions in the transfer of electrons from NADH to the respiratory chain. The immediate electron acceptor for the enzyme is believed to be ubiquinone. The sequence is that of NADH-ubiquinone oxidoreductase chain 1 from Aedes aegypti (Yellowfever mosquito).